The primary structure comprises 137 residues: Large ribosomal subunit protein uL16c (137 aa).

This sequence belongs to the universal ribosomal protein uL16 family. As to quaternary structure, part of the 50S ribosomal subunit.

The protein resides in the plastid. This chain is Large ribosomal subunit protein uL16c, found in Cuscuta reflexa (Southern Asian dodder).